The chain runs to 1123 residues: Telomerase reverse transcriptase (1123 aa).

The interval 1-230 (MPRAPRCRAV…ARRRRGSPGS (230 aa)) is RNA-interacting domain 1. Residues 58 to 197 (VPWGARPPPA…APGLPGLPGL (140 aa)) form a GQ motif region. Positions 137-141 (WGLLL) are required for regulating specificity for telomeric DNA and for processivity for primer elongation. Residues 202 to 311 (AGAGASADLR…GVPHDPAHPE (110 aa)) are disordered. Positions 222–240 (RRRRGSPGSGVPLAKRPRR) match the Bipartite nuclear localization signal motif. Phosphoserine; by PKB/AKT1 is present on S227. A linker region spans residues 231–308 (GVPLAKRPRR…GPQGVPHDPA (78 aa)). The segment covering 260–279 (PPVSEAPAVTPAVAASPAAS) has biased composition (low complexity). Positions 309–539 (HPETKRFLYC…LARFLVLVDG (231 aa)) are RNA-interacting domain 2. A TFLY; involved in RNA binding motif is present at residues 312 to 317 (TKRFLY). The QFP motif stretch occupies residues 360 to 510 (ARRMRRLPAR…MKVRDCTWLH (151 aa)). The segment at 381 to 401 (LGNHARCPYRALLRTHCPLRA) is CP motif. S446 carries the post-translational modification Phosphoserine; by DYRK2. Positions 595–926 (EVRRHREARP…CLFPWCGLLL (332 aa)) constitute a Reverse transcriptase domain. Phosphotyrosine; by SRC-type Tyr-kinases is present on Y697. D702, D859, and D860 together coordinate Mg(2+). Residues 905–919 (LGSAAPLQLPAHCLF) form a required for oligomerization region. The interval 921–925 (WCGLL) is primer grip sequence. Residues 927–1123 (DTRTLEVSCD…LTADFKTILD (197 aa)) form a CTE region.

Belongs to the reverse transcriptase family. Telomerase subfamily. As to quaternary structure, catalytic component of the telomerase holoenzyme complex composed of one molecule of TERT, one molecule of WRAP53/TCAB1, two molecules of H/ACA ribonucleoprotein complex subunits DKC1, NOP10, NHP2 and GAR1, and a telomerase RNA template component (TERC). The telomerase holoenzyme complex is associated with TEP1, SMG6/EST1A and POT1. The molecular chaperone HSP90/P23 complex is required for correct assembly and stabilization of the active telomerase. Interacts directly with HSP90A and PTGES3. Interacts with HSPA1A; the interaction occurs in the absence of TERC and dissociates once the complex has formed. Interacts with RAN; the interaction promotes nuclear export of TERT. Interacts with XPO1. Interacts with PTPN11; the interaction retains TERT in the nucleus. Interacts with NCL (via RRM1 and C-terminal RRM4/Arg/Gly-rich domains); the interaction is important for nucleolar localization of TERT. Interacts with SMARCA4 (via the bromodomain); the interaction regulates Wnt-mediated signaling. Interacts with MCRS1 (isoform MCRS2); the interaction inhibits in vitro telomerase activity. Interacts with PIF1; the interaction has no effect on the elongation activity of TERT. Interacts with PML; the interaction recruits TERT to PML bodies and inhibits telomerase activity. Interacts with GNL3L. Interacts with isoform 1 and isoform 2 of NVL. Interacts with DHX36. Interacts with ATF7. Phosphorylation at Tyr-697 under oxidative stress leads to translocation of TERT to the cytoplasm and reduces its antiapoptotic activity. Dephosphorylated by SHP2/PTPN11 leading to nuclear retention. Phosphorylation at Ser-227 by the AKT pathway promotes nuclear location. Phosphorylation at the G2/M phase at Ser-446 by DYRK2 promotes ubiquitination by the EDVP complex and degradation. In terms of processing, ubiquitinated by the EDVP complex, a E3 ligase complex following phosphorylation at Ser-446 by DYRK2. Ubiquitinated leads to proteasomal degradation.

It localises to the nucleus. The protein resides in the nucleolus. It is found in the nucleoplasm. The protein localises to the chromosome. Its subcellular location is the telomere. It localises to the cytoplasm. The protein resides in the PML body. The enzyme catalyses DNA(n) + a 2'-deoxyribonucleoside 5'-triphosphate = DNA(n+1) + diphosphate. Its function is as follows. Telomerase is a ribonucleoprotein enzyme essential for the replication of chromosome termini in most eukaryotes. Active in progenitor and cancer cells. Inactive, or very low activity, in normal somatic cells. Catalytic component of the teleromerase holoenzyme complex whose main activity is the elongation of telomeres by acting as a reverse transcriptase that adds simple sequence repeats to chromosome ends by copying a template sequence within the RNA component of the enzyme. Catalyzes the RNA-dependent extension of 3'-chromosomal termini with the 6-nucleotide telomeric repeat unit, 5'-TTAGGG-3'. The catalytic cycle involves primer binding, primer extension and release of product once the template boundary has been reached or nascent product translocation followed by further extension. More active on substrates containing 2 or 3 telomeric repeats. Telomerase activity is regulated by a number of factors including telomerase complex-associated proteins, chaperones and polypeptide modifiers. Modulates Wnt signaling. Plays important roles in aging and antiapoptosis. The protein is Telomerase reverse transcriptase (TERT) of Canis lupus familiaris (Dog).